We begin with the raw amino-acid sequence, 638 residues long: Chaperone protein DnaK (638 aa).

At threonine 198 the chain carries Phosphothreonine; by autocatalysis. Residues 602–638 form a disordered region; it reads QAKSQAQGGEEAQAKDAGQSNDDVVDAEFEEVKDDKK. Acidic residues predominate over residues 624–638; the sequence is DVVDAEFEEVKDDKK.

The protein belongs to the heat shock protein 70 family.

Acts as a chaperone. This is Chaperone protein DnaK from Shewanella denitrificans (strain OS217 / ATCC BAA-1090 / DSM 15013).